Reading from the N-terminus, the 248-residue chain is Phycocyanobilin:ferredoxin oxidoreductase (248 aa).

This sequence belongs to the HY2 family.

The enzyme catalyses (2R,3Z)-phycocyanobilin + 4 oxidized [2Fe-2S]-[ferredoxin] = biliverdin IXalpha + 4 reduced [2Fe-2S]-[ferredoxin] + 4 H(+). In terms of biological role, catalyzes the four-electron reduction of biliverdin IX-alpha (2-electron reduction at both the A and D rings); the reaction proceeds via an isolatable 2-electron intermediate, 181,182-dihydrobiliverdin. This chain is Phycocyanobilin:ferredoxin oxidoreductase, found in Synechococcus sp. (strain ATCC 27144 / PCC 6301 / SAUG 1402/1) (Anacystis nidulans).